The primary structure comprises 218 residues: MQPMLKYCGNRSLEDVQAAATSKADYLGFVFAKSKRQVTVNEVTRWLDQVNVNGKKLVALFVNEPIDQIVNVVKQGPFDVIQCHGTENRDYIMTLKERIDLPVWKAIHHSGQGLQMMRALEGVVEAFVVDAKVEGQWGGTGQSFDWHVVPLYLQEGKRQQVPVFIAGGINPHNVELLLPYGPCGIDISSGIEENGQKSSAKICQIEKKVLGDDSHISR.

Belongs to the TrpF family.

It catalyses the reaction N-(5-phospho-beta-D-ribosyl)anthranilate = 1-(2-carboxyphenylamino)-1-deoxy-D-ribulose 5-phosphate. It participates in amino-acid biosynthesis; L-tryptophan biosynthesis; L-tryptophan from chorismate: step 3/5. This chain is N-(5'-phosphoribosyl)anthranilate isomerase, found in Halalkalibacterium halodurans (strain ATCC BAA-125 / DSM 18197 / FERM 7344 / JCM 9153 / C-125) (Bacillus halodurans).